The primary structure comprises 74 residues: Small ribosomal subunit protein bS20c (74 aa).

This sequence belongs to the bacterial ribosomal protein bS20 family.

The protein resides in the plastid. The protein localises to the chloroplast. Binds directly to 16S ribosomal RNA. The chain is Small ribosomal subunit protein bS20c from Cyanidioschyzon merolae (strain NIES-3377 / 10D) (Unicellular red alga).